The primary structure comprises 369 residues: Maltose/maltodextrin import ATP-binding protein MalK (369 aa).

The 231-residue stretch at 4–234 (VQLRNVTKAW…PADRFVAGFI (231 aa)) folds into the ABC transporter domain. 36 to 43 (GPSGCGKS) contacts ATP.

This sequence belongs to the ABC transporter superfamily. Maltooligosaccharide importer (TC 3.A.1.1.1) family. In terms of assembly, the complex is composed of two ATP-binding proteins (MalK), two transmembrane proteins (MalG and MalK) and a solute-binding protein (MalE).

The protein resides in the cell inner membrane. It catalyses the reaction D-maltose(out) + ATP + H2O = D-maltose(in) + ADP + phosphate + H(+). Its function is as follows. Part of the ABC transporter complex MalEFGK involved in maltose/maltodextrin import. Responsible for energy coupling to the transport system. In Salmonella paratyphi A (strain ATCC 9150 / SARB42), this protein is Maltose/maltodextrin import ATP-binding protein MalK.